The primary structure comprises 477 residues: Pentatricopeptide repeat-containing protein At5g47360 (477 aa).

PPR repeat units lie at residues 129–163 (NVKTMRIVLTLCNQANLADEALWVLRKFPEFNVCA), 164–198 (DTVAYNLVIRLFADKGDLNIADMLIKEMDCVGLYP), 199–233 (DVITYTSMINGYCNAGKIDDAWRLAKEMSKHDCVL), 234–264 (NSVTYSRILEGVCKSGDMERALELLAEMEKE), 273–307 (NAVTYTLVIQAFCEKRRVEEALLVLDRMGNRGCMP), 308–343 (NRVTACVLIQGVLENDEDVKALSKLIDKLVKLGGVS), 344–378 (LSECFSSATVSLIRMKRWEEAEKIFRLMLVRGVRP), 379–413 (DGLACSHVFRELCLLERYLDCFLLYQEIEKKDVKS), and 416–450 (DSDIHAVLLLGLCQQGNSWEAAKLAKSMLDKKMRL).

This sequence belongs to the PPR family. P subfamily.

The chain is Pentatricopeptide repeat-containing protein At5g47360 from Arabidopsis thaliana (Mouse-ear cress).